A 293-amino-acid polypeptide reads, in one-letter code: DOMON domain-containing protein FRRS1L (293 aa).

The first 28 residues, 1–28, serve as a signal peptide directing secretion; it reads MARPPRQHPGVWASLLLLLLTGPAACAA. The tract at residues 29–61 is disordered; it reads SPADDGAGPGGRGPRGRARGDTGADEAVPRHDS. The segment covering 46–61 has biased composition (basic and acidic residues); the sequence is ARGDTGADEAVPRHDS. A DOMON domain is found at 119–234; the sequence is CDYFLSYRMI…WYYLFAWGPA (116 aa). A helical membrane pass occupies residues 271–291; that stretch reads TFSSPFCLLLIVALTFYLLMG.

In terms of assembly, component of the outer core of AMPAR complex. AMPAR complex consists of an inner core made of 4 pore-forming GluA/GRIA proteins (GRIA1, GRIA2, GRIA3 and GRIA4) and 4 major auxiliary subunits arranged in a twofold symmetry. One of the two pairs of distinct binding sites is occupied either by CNIH2, CNIH3 or CACNG2, CACNG3. The other harbors CACNG2, CACNG3, CACNG4, CACNG8 or GSG1L. This inner core of AMPAR complex is complemented by outer core constituents binding directly to the GluA/GRIA proteins at sites distinct from the interaction sites of the inner core constituents. Outer core constituents include at least PRRT1, PRRT2, CKAMP44/SHISA9, FRRS1L and NRN1. The proteins of the inner and outer core serve as a platform for other, more peripherally associated AMPAR constituents. Alone or in combination, these auxiliary subunits control the gating and pharmacology of the AMPAR complex and profoundly impact their biogenesis and protein processing. Expressed in adult and fetal brain. Very weak expression in medulla, spinal cord and in adult ovary.

The protein localises to the cell membrane. It localises to the synapse. Important modulator of glutamate signaling pathway. This Homo sapiens (Human) protein is DOMON domain-containing protein FRRS1L (FRRS1L).